The following is a 227-amino-acid chain: Protein rapunzel (227 aa).

The chain crosses the membrane as a helical span at residues 179-196 (LAYLFCIGFIALMGYYGI).

The protein resides in the membrane. In Danio rerio (Zebrafish), this protein is Protein rapunzel.